The primary structure comprises 294 residues: tRNA pseudouridine synthase B (294 aa).

Catalysis depends on D38, which acts as the Nucleophile.

This sequence belongs to the pseudouridine synthase TruB family. Type 1 subfamily.

It carries out the reaction uridine(55) in tRNA = pseudouridine(55) in tRNA. In terms of biological role, responsible for synthesis of pseudouridine from uracil-55 in the psi GC loop of transfer RNAs. This chain is tRNA pseudouridine synthase B, found in Clostridium perfringens (strain SM101 / Type A).